The chain runs to 443 residues: Xaa-Pro dipeptidase (443 aa).

Positions 246, 257, 339, 384, and 423 each coordinate Mn(2+).

The protein belongs to the peptidase M24B family. Bacterial-type prolidase subfamily. Requires Mn(2+) as cofactor.

The catalysed reaction is Xaa-L-Pro dipeptide + H2O = an L-alpha-amino acid + L-proline. Splits dipeptides with a prolyl residue in the C-terminal position. This is Xaa-Pro dipeptidase from Citrobacter koseri (strain ATCC BAA-895 / CDC 4225-83 / SGSC4696).